We begin with the raw amino-acid sequence, 271 residues long: Formamidopyrimidine-DNA glycosylase (271 aa).

The active-site Schiff-base intermediate with DNA is proline 2. Glutamate 3 serves as the catalytic Proton donor. Lysine 57 serves as the catalytic Proton donor; for beta-elimination activity. DNA contacts are provided by histidine 90, arginine 109, and lysine 151. The segment at 236–270 (HVYSRGGETCTSCGNLLSEIRLGQRTTVFCGICQT) adopts an FPG-type zinc-finger fold. Arginine 260 functions as the Proton donor; for delta-elimination activity in the catalytic mechanism.

The protein belongs to the FPG family. In terms of assembly, monomer. The cofactor is Zn(2+).

The enzyme catalyses Hydrolysis of DNA containing ring-opened 7-methylguanine residues, releasing 2,6-diamino-4-hydroxy-5-(N-methyl)formamidopyrimidine.. It catalyses the reaction 2'-deoxyribonucleotide-(2'-deoxyribose 5'-phosphate)-2'-deoxyribonucleotide-DNA = a 3'-end 2'-deoxyribonucleotide-(2,3-dehydro-2,3-deoxyribose 5'-phosphate)-DNA + a 5'-end 5'-phospho-2'-deoxyribonucleoside-DNA + H(+). In terms of biological role, involved in base excision repair of DNA damaged by oxidation or by mutagenic agents. Acts as a DNA glycosylase that recognizes and removes damaged bases. Has a preference for oxidized purines, such as 7,8-dihydro-8-oxoguanine (8-oxoG). Has AP (apurinic/apyrimidinic) lyase activity and introduces nicks in the DNA strand. Cleaves the DNA backbone by beta-delta elimination to generate a single-strand break at the site of the removed base with both 3'- and 5'-phosphates. This is Formamidopyrimidine-DNA glycosylase from Shewanella baltica (strain OS195).